An 883-amino-acid chain; its full sequence is Alanine--tRNA ligase (883 aa).

Zn(2+) contacts are provided by H564, H568, C666, and H670.

The protein belongs to the class-II aminoacyl-tRNA synthetase family. Requires Zn(2+) as cofactor.

It localises to the cytoplasm. It carries out the reaction tRNA(Ala) + L-alanine + ATP = L-alanyl-tRNA(Ala) + AMP + diphosphate. Catalyzes the attachment of alanine to tRNA(Ala) in a two-step reaction: alanine is first activated by ATP to form Ala-AMP and then transferred to the acceptor end of tRNA(Ala). Also edits incorrectly charged Ser-tRNA(Ala) and Gly-tRNA(Ala) via its editing domain. In Synechococcus sp. (strain JA-3-3Ab) (Cyanobacteria bacterium Yellowstone A-Prime), this protein is Alanine--tRNA ligase.